Here is a 474-residue protein sequence, read N- to C-terminus: Ribosomal RNA small subunit methyltransferase F (474 aa).

S-adenosyl-L-methionine-binding positions include 119-125 (AAAPGSK), E143, D170, and D188. Catalysis depends on C241, which acts as the Nucleophile.

It belongs to the class I-like SAM-binding methyltransferase superfamily. RsmB/NOP family.

The protein localises to the cytoplasm. It carries out the reaction cytidine(1407) in 16S rRNA + S-adenosyl-L-methionine = 5-methylcytidine(1407) in 16S rRNA + S-adenosyl-L-homocysteine + H(+). Functionally, specifically methylates the cytosine at position 1407 (m5C1407) of 16S rRNA. This Shewanella oneidensis (strain ATCC 700550 / JCM 31522 / CIP 106686 / LMG 19005 / NCIMB 14063 / MR-1) protein is Ribosomal RNA small subunit methyltransferase F.